A 654-amino-acid chain; its full sequence is MSDFQHAQLDWDENGQPLSRVFGDVYFSRHSGLDETRHVFLATNRLAERFAALGDGEALCIGETGFGTGLNFLCAWQLFERVAPPGARLEFVSVEKFPLAAADLRRALALWPELAPWSEPLLGQYLALHPGFQRLAFAGGRVGLTLLLGDALECLPQLDARIDAWFLDGFAPAKNPDMWSPALFAELARLSAPQATLGTFTSAGFVRRGLIEAGFAMQRVPGYGQKREMLGGTYQGPPASAGKPWYARPAPHAGRRAALVVGGGLAGCASAASLAARGWQVTLIERHPGLAREASGNPQGVLYLKLSAHGTPLSRLVLSGFGHTRRLLERLRRGHDWDACGVLQLAFDAKEAQRQAQLAAAFPADLLHGLDREQAERLAGVALPAGGLFYPEAGWVHPPALCQALATTPGITLLSGRAVRLRREGDDWCAYAGDECLARAPLAILATAADIRDFPPAAELPLKRIRGQVTRLPATAQSRALRTVVCAEGYVAPPRGDEHTLGASFDFKSEDLAPTLAEHQGNLELLREISPDLLQRLGADDLPLERLEGRAAFRCTSPDYLPLVGPLAERAAFDEAYAVLARDARQVPERACPWLPGLYLNSGHGSRGLISAPLSGELLAAWICGEPLPLPRAVGEACHPNRFLLRDLVRGQRG.

The interval 1–235 is tRNA (mnm(5)s(2)U34)-methyltransferase; that stretch reads MSDFQHAQLD…KREMLGGTYQ (235 aa). Residues 261–654 form an FAD-dependent cmnm(5)s(2)U34 oxidoreductase region; it reads VGGGLAGCAS…LRDLVRGQRG (394 aa).

This sequence in the N-terminal section; belongs to the methyltransferase superfamily. tRNA (mnm(5)s(2)U34)-methyltransferase family. It in the C-terminal section; belongs to the DAO family. The cofactor is FAD.

It localises to the cytoplasm. It catalyses the reaction 5-aminomethyl-2-thiouridine(34) in tRNA + S-adenosyl-L-methionine = 5-methylaminomethyl-2-thiouridine(34) in tRNA + S-adenosyl-L-homocysteine + H(+). Functionally, catalyzes the last two steps in the biosynthesis of 5-methylaminomethyl-2-thiouridine (mnm(5)s(2)U) at the wobble position (U34) in tRNA. Catalyzes the FAD-dependent demodification of cmnm(5)s(2)U34 to nm(5)s(2)U34, followed by the transfer of a methyl group from S-adenosyl-L-methionine to nm(5)s(2)U34, to form mnm(5)s(2)U34. The sequence is that of tRNA 5-methylaminomethyl-2-thiouridine biosynthesis bifunctional protein MnmC from Pseudomonas paraeruginosa (strain DSM 24068 / PA7) (Pseudomonas aeruginosa (strain PA7)).